A 741-amino-acid polypeptide reads, in one-letter code: Lamin-B receptor (741 aa).

A disordered region spans residues 29-126 (RLRRPRRTED…TGSGSGSSLP (98 aa)). Low complexity-rich tracts occupy residues 57-84 (TRRTGSVTAAGATATATATAGPATRTRA) and 109-126 (PRSSVGPLTGSGSGSSLP). Position 111 is a phosphoserine (Ser111). Position 135 is a phosphothreonine (Thr135). Position 144 is a phosphoserine (Ser144). The span at 160 to 184 (TNTSSGAPNKAFNTSSVNSGNSFSR) shows a compositional bias: polar residues. Residues 160–194 (TNTSSGAPNKAFNTSSVNSGNSFSRTTTSSTTTTT) are disordered. Residues 185 to 194 (TTTSSTTTTT) show a composition bias toward low complexity. A phosphoserine mark is found at Ser223 and Ser225. The span at 231 to 240 (LAGTPVTNTE) shows a compositional bias: polar residues. The tract at residues 231 to 277 (LAGTPVTNTEEGSRYSRSVSRSVYDDEKSSKRSYSTGEEDIDEEDEL) is disordered. Phosphothreonine occurs at positions 234 and 237. A phosphoserine mark is found at Ser243, Ser246, Ser248, Ser250, and Ser263. Thr266 carries the post-translational modification Phosphothreonine. Residues 267–277 (GEEDIDEEDEL) show a composition bias toward acidic residues. Residue Ser284 is modified to Phosphoserine. A Phosphothreonine modification is found at Thr288. Ser291 carries the phosphoserine modification. Thr293 bears the Phosphothreonine mark. Ser298 carries the phosphoserine modification. Transmembrane regions (helical) follow at residues 308–328 (FGGWLGAFLFLLLLPTAVYYL), 363–383 (VVGAFAAYQVVVFLLVALLPG), 402–422 (LTLLIASGVAEYLKYPVVTFV), 429–449 (FCIFGLVGAFVAAAWSYWLVD), 497–517 (LSLVTTLIYATCYIYQTLVWP), 543–563 (PATLFSASCLLFYVLDAIIFE), 577–599 (YGCLLLLRYAATPYLLTAVTKYF), and 604–624 (VPISCWYAPLAVAALLSLGLL). Phosphoserine occurs at positions 640 and 642. The chain crosses the membrane as a helical span at residues 687 to 707 (MALRPAWPPVLGLSLIILLLL).

The protein belongs to the ERG4/ERG24 family. Interacts directly with LAM.

The protein resides in the nucleus inner membrane. In terms of biological role, anchors the lamina and the heterochromatin to the inner nuclear membrane. The chain is Lamin-B receptor from Drosophila melanogaster (Fruit fly).